Consider the following 484-residue polypeptide: Phosphatidylinositol N-acetylglucosaminyltransferase subunit A (484 aa).

Topologically, residues 1–421 are cytoplasmic; it reads MACRGGAGNG…RLDRLISHCG (421 aa). 2 positions are modified to phosphoserine: S21 and S24. A helical membrane pass occupies residues 422-442; sequence PVTGYIFALLAVFNFLFLIFL. The Lumenal segment spans residues 443-484; that stretch reads RWMTPDSIIDVAIDATGPRGAWTNNYSHSKRGGENNEISETR. N467 is a glycosylation site (N-linked (GlcNAc...) asparagine).

It belongs to the glycosyltransferase group 1 family. Glycosyltransferase 4 subfamily. Component of the glycosylphosphatidylinositol-N-acetylglucosaminyltransferase (GPI-GnT) complex composed at least by PIGA, PIGC, PIGH, PIGP, PIGQ, PIGY and DPM2. Interacts with PIGC, PIGH, PIGP, PIGQ and DPM2. Interacts directly with PIGY; this interaction regulates glycosylphosphatidylinositol-N-acetylglucosaminyltransferase activity. Interacts with PIGQ.

The protein resides in the endoplasmic reticulum membrane. It catalyses the reaction a 1,2-diacyl-sn-glycero-3-phospho-(1D-myo-inositol) + UDP-N-acetyl-alpha-D-glucosamine = a 6-(N-acetyl-alpha-D-glucosaminyl)-1-(1,2-diacyl-sn-glycero-3-phospho)-1D-myo-inositol + UDP + H(+). It functions in the pathway glycolipid biosynthesis; glycosylphosphatidylinositol-anchor biosynthesis. Functionally, catalytic subunit of the glycosylphosphatidylinositol-N-acetylglucosaminyltransferase (GPI-GnT) complex that catalyzes the transfer of N-acetylglucosamine from UDP-N-acetylglucosamine to phosphatidylinositol and participates in the first step of GPI biosynthesis. In Homo sapiens (Human), this protein is Phosphatidylinositol N-acetylglucosaminyltransferase subunit A.